The primary structure comprises 294 residues: tRNA dimethylallyltransferase (294 aa).

Position 10 to 17 (glycine 10 to serine 17) interacts with ATP. Residue threonine 12–serine 17 coordinates substrate. Positions aspartate 36–glutamine 39 are interaction with substrate tRNA.

Belongs to the IPP transferase family. In terms of assembly, monomer. Mg(2+) is required as a cofactor.

It carries out the reaction adenosine(37) in tRNA + dimethylallyl diphosphate = N(6)-dimethylallyladenosine(37) in tRNA + diphosphate. Functionally, catalyzes the transfer of a dimethylallyl group onto the adenine at position 37 in tRNAs that read codons beginning with uridine, leading to the formation of N6-(dimethylallyl)adenosine (i(6)A). In Wolbachia sp. subsp. Drosophila simulans (strain wRi), this protein is tRNA dimethylallyltransferase.